The sequence spans 145 residues: Endoribonuclease YbeY (145 aa).

Residues His109, His113, and His119 each contribute to the Zn(2+) site.

It belongs to the endoribonuclease YbeY family. Requires Zn(2+) as cofactor.

The protein localises to the cytoplasm. Single strand-specific metallo-endoribonuclease involved in late-stage 70S ribosome quality control and in maturation of the 3' terminus of the 16S rRNA. The chain is Endoribonuclease YbeY from Ruthia magnifica subsp. Calyptogena magnifica.